Consider the following 520-residue polypeptide: GMP synthase [glutamine-hydrolyzing] (520 aa).

The Glutamine amidotransferase type-1 domain maps to 9 to 202 (KILILDFGSQ…VRKICGCSGQ (194 aa)). The Nucleophile role is filled by cysteine 86. Active-site residues include histidine 176 and glutamate 178. The GMPS ATP-PPase domain maps to 203-395 (WTPGHIIDDA…LGLPHQMVWR (193 aa)). 230-236 (SGGVDSS) is an ATP binding site.

In terms of assembly, homodimer.

It carries out the reaction XMP + L-glutamine + ATP + H2O = GMP + L-glutamate + AMP + diphosphate + 2 H(+). It participates in purine metabolism; GMP biosynthesis; GMP from XMP (L-Gln route): step 1/1. In terms of biological role, catalyzes the synthesis of GMP from XMP. The sequence is that of GMP synthase [glutamine-hydrolyzing] from Geobacter metallireducens (strain ATCC 53774 / DSM 7210 / GS-15).